Here is a 392-residue protein sequence, read N- to C-terminus: Formate-dependent phosphoribosylglycinamide formyltransferase (392 aa).

Residues 22–23 (EL) and Glu82 each bind N(1)-(5-phospho-beta-D-ribosyl)glycinamide. ATP contacts are provided by residues Arg114, Lys155, 160–165 (SSGKGQ), 195–198 (EGVV), and Glu203. Positions 119 to 308 (RLAAEELQLP…EFALHVRAFL (190 aa)) constitute an ATP-grasp domain. Residues Glu267 and Glu279 each contribute to the Mg(2+) site. Residues Asp286, Lys355, and 362–363 (RR) each bind N(1)-(5-phospho-beta-D-ribosyl)glycinamide.

It belongs to the PurK/PurT family. As to quaternary structure, homodimer.

It catalyses the reaction N(1)-(5-phospho-beta-D-ribosyl)glycinamide + formate + ATP = N(2)-formyl-N(1)-(5-phospho-beta-D-ribosyl)glycinamide + ADP + phosphate + H(+). The protein operates within purine metabolism; IMP biosynthesis via de novo pathway; N(2)-formyl-N(1)-(5-phospho-D-ribosyl)glycinamide from N(1)-(5-phospho-D-ribosyl)glycinamide (formate route): step 1/1. In terms of biological role, involved in the de novo purine biosynthesis. Catalyzes the transfer of formate to 5-phospho-ribosyl-glycinamide (GAR), producing 5-phospho-ribosyl-N-formylglycinamide (FGAR). Formate is provided by PurU via hydrolysis of 10-formyl-tetrahydrofolate. This Shigella sonnei (strain Ss046) protein is Formate-dependent phosphoribosylglycinamide formyltransferase.